A 767-amino-acid polypeptide reads, in one-letter code: Syn-copalyl diphosphate synthase, chloroplastic (767 aa).

The transit peptide at 1-47 (MPVFTASFQCVTLFGQPASAADAQPLLQGQRPFLHLHARRRRPCGPM) directs the protein to the chloroplast. The segment at 45–74 (GPMLISKSPPYPASEETREWEADGQHEHTD) is disordered. The span at 59 to 74 (EETREWEADGQHEHTD) shows a compositional bias: basic and acidic residues. Substrate is bound at residue Lys233. Mg(2+) is bound by residues Asp365 and Asp367. The DXDD motif signature appears at 365–368 (DIDD). Lys453 lines the substrate pocket.

The protein belongs to the terpene synthase family. It depends on Mg(2+) as a cofactor.

The protein resides in the plastid. It is found in the chloroplast. The enzyme catalyses (2E,6E,10E)-geranylgeranyl diphosphate = 9alpha-copalyl diphosphate. Functionally, catalyzes the conversion of geranylgeranyl diphosphate to the phytoalexin precursor syn-copalyl diphosphate. Required for the biosynthesis of momilactones that exude from roots and act as allelochemicals against lowland weeds in paddy soil. The protein is Syn-copalyl diphosphate synthase, chloroplastic of Oryza sativa subsp. japonica (Rice).